The chain runs to 638 residues: Pentatricopeptide repeat-containing protein At3g49730 (638 aa).

PPR repeat units follow at residues Ser-130–Leu-164, Glu-166–Pro-200, Asp-201–Lys-231, Asn-235–Pro-269, Asp-270–Pro-304, Asn-305–Ala-340, Asp-341–Pro-375, Ser-376–Pro-410, Asp-411–Pro-445, Gly-446–Ser-480, Gln-483–Lys-513, and Asn-520–Pro-554. Residues Leu-604–Leu-638 are disordered.

This sequence belongs to the PPR family. P subfamily.

The sequence is that of Pentatricopeptide repeat-containing protein At3g49730 from Arabidopsis thaliana (Mouse-ear cress).